Reading from the N-terminus, the 226-residue chain is Ribonuclease 3 (226 aa).

Residues 6–128 (FNKLQKKMGY…IIGGIFLDSN (123 aa)) enclose the RNase III domain. E41 lines the Mg(2+) pocket. Residue D45 is part of the active site. Residues N114 and E117 each contribute to the Mg(2+) site. E117 is an active-site residue. A DRBM domain is found at 155–225 (DPKTRLQEYL…AKQALLLFNI (71 aa)).

This sequence belongs to the ribonuclease III family. In terms of assembly, homodimer. It depends on Mg(2+) as a cofactor.

Its subcellular location is the cytoplasm. It catalyses the reaction Endonucleolytic cleavage to 5'-phosphomonoester.. In terms of biological role, digests double-stranded RNA. Involved in the processing of primary rRNA transcript to yield the immediate precursors to the large and small rRNAs (23S and 16S). Processes some mRNAs, and tRNAs when they are encoded in the rRNA operon. Processes pre-crRNA and tracrRNA of type II CRISPR loci if present in the organism. This is Ribonuclease 3 from Wigglesworthia glossinidia brevipalpis.